A 1199-amino-acid polypeptide reads, in one-letter code: DNA polymerase beta (1199 aa).

The protein belongs to the DNA polymerase type-B family.

It carries out the reaction DNA(n) + a 2'-deoxyribonucleoside 5'-triphosphate = DNA(n+1) + diphosphate. In terms of biological role, DNA-directed DNA polymerase involved in viral DNA replication. The chain is DNA polymerase beta from Ornithodoros (relapsing fever ticks).